A 634-amino-acid polypeptide reads, in one-letter code: Threonine--tRNA ligase (634 aa).

The TGS domain maps to 1 to 61 (MINITLPDGS…DHDASLRIIT (61 aa)). The segment at 243–534 (DHRRIGKAQD…LIEHHAGAFP (292 aa)) is catalytic. Residues Cys334, His385, and His511 each coordinate Zn(2+).

Belongs to the class-II aminoacyl-tRNA synthetase family. As to quaternary structure, homodimer. Zn(2+) is required as a cofactor.

It localises to the cytoplasm. It catalyses the reaction tRNA(Thr) + L-threonine + ATP = L-threonyl-tRNA(Thr) + AMP + diphosphate + H(+). Catalyzes the attachment of threonine to tRNA(Thr) in a two-step reaction: L-threonine is first activated by ATP to form Thr-AMP and then transferred to the acceptor end of tRNA(Thr). Also edits incorrectly charged L-seryl-tRNA(Thr). In Xanthomonas axonopodis pv. citri (strain 306), this protein is Threonine--tRNA ligase.